A 366-amino-acid polypeptide reads, in one-letter code: 5-formaminoimidazole-4-carboxamide-1-(beta)-D-ribofuranosyl 5'-monophosphate synthetase (366 aa).

Histidine 27 and serine 96 together coordinate 5-amino-1-(5-phospho-beta-D-ribosyl)imidazole-4-carboxamide. Positions 131–357 (RKWLEDAGVP…IAREIKEAVK (227 aa)) constitute an ATP-grasp domain. Residues 154 to 208 (PVIV…VRFY) and glutamate 239 each bind ATP. 5-amino-1-(5-phospho-beta-D-ribosyl)imidazole-4-carboxamide is bound at residue asparagine 263. 2 residues coordinate Mg(2+): glutamate 302 and glutamate 315.

It belongs to the phosphohexose mutase family. Mg(2+) is required as a cofactor. The cofactor is Mn(2+).

The catalysed reaction is 5-amino-1-(5-phospho-beta-D-ribosyl)imidazole-4-carboxamide + formate + ATP = 5-formamido-1-(5-phospho-D-ribosyl)imidazole-4-carboxamide + ADP + phosphate. The protein operates within purine metabolism; IMP biosynthesis via de novo pathway; 5-formamido-1-(5-phospho-D-ribosyl)imidazole-4-carboxamide from 5-amino-1-(5-phospho-D-ribosyl)imidazole-4-carboxamide (formate route): step 1/1. Functionally, catalyzes the ATP- and formate-dependent formylation of 5-aminoimidazole-4-carboxamide-1-beta-d-ribofuranosyl 5'-monophosphate (AICAR) to 5-formaminoimidazole-4-carboxamide-1-beta-d-ribofuranosyl 5'-monophosphate (FAICAR) in the absence of folates. This is 5-formaminoimidazole-4-carboxamide-1-(beta)-D-ribofuranosyl 5'-monophosphate synthetase from Korarchaeum cryptofilum (strain OPF8).